The chain runs to 288 residues: Zinc finger protein 42 (288 aa).

2 stretches are compositionally biased toward basic and acidic residues: residues 1–11 (MNEQKMNEQMK) and 26–38 (ALDRLTLKQDEAR). Residues 1–48 (MNEQKMNEQMKKTAKTSGQKGPGGRALDRLTLKQDEARPVQNTRVEAP) form a disordered region. C2H2-type zinc fingers lie at residues 170–194 (LECPQAGCKKKLRGKTALRKHMLVH), 199–221 (HVCAECGKAFTESSKLKRHFLVH), 227–251 (YQCTFEGCGKRFSLDFNLRTHIRIH), and 258–281 (VCPFDGCEKSFIQSNNQKIHILTH). Glycyl lysine isopeptide (Lys-Gly) (interchain with G-Cter in ubiquitin) cross-links involve residues Lys-213 and Lys-215.

This sequence belongs to the krueppel C2H2-type zinc-finger protein family. Polyubiquitinated by RNF12, leading to proteasomal degradation. In terms of tissue distribution, restricted to testis, to germ cells in the early stages of spermatogenesis. Not expressed in spermatids, nor spermatozoa. Expressed in embryonic stem (ES) cells.

The protein localises to the nucleus. Involved in the reprogramming of X-chromosome inactivation during the acquisition of pluripotency. Required for efficient elongation of TSIX, a non-coding RNA antisense to XIST. Binds DXPas34 enhancer within the TSIX promoter. Involved in ES cell self-renewal. The chain is Zinc finger protein 42 (Zfp42) from Mus musculus (Mouse).